A 268-amino-acid chain; its full sequence is tRNA pseudouridine synthase A (268 aa).

Residue Asp-63 is the Nucleophile of the active site. Tyr-122 lines the substrate pocket.

Belongs to the tRNA pseudouridine synthase TruA family. As to quaternary structure, homodimer.

It catalyses the reaction uridine(38/39/40) in tRNA = pseudouridine(38/39/40) in tRNA. Its function is as follows. Formation of pseudouridine at positions 38, 39 and 40 in the anticodon stem and loop of transfer RNAs. This Treponema denticola (strain ATCC 35405 / DSM 14222 / CIP 103919 / JCM 8153 / KCTC 15104) protein is tRNA pseudouridine synthase A.